Here is a 446-residue protein sequence, read N- to C-terminus: Probable glycine dehydrogenase (decarboxylating) subunit 1 (446 aa).

It belongs to the GcvP family. N-terminal subunit subfamily. In terms of assembly, the glycine cleavage system is composed of four proteins: P, T, L and H. In this organism, the P 'protein' is a heterodimer of two subunits.

It carries out the reaction N(6)-[(R)-lipoyl]-L-lysyl-[glycine-cleavage complex H protein] + glycine + H(+) = N(6)-[(R)-S(8)-aminomethyldihydrolipoyl]-L-lysyl-[glycine-cleavage complex H protein] + CO2. Its function is as follows. The glycine cleavage system catalyzes the degradation of glycine. The P protein binds the alpha-amino group of glycine through its pyridoxal phosphate cofactor; CO(2) is released and the remaining methylamine moiety is then transferred to the lipoamide cofactor of the H protein. In Protochlamydia amoebophila (strain UWE25), this protein is Probable glycine dehydrogenase (decarboxylating) subunit 1.